Here is a 467-residue protein sequence, read N- to C-terminus: Methylenetetrahydrofolate--tRNA-(uracil-5-)-methyltransferase TrmFO (467 aa).

11-16 (GAGLAG) serves as a coordination point for FAD.

The protein belongs to the MnmG family. TrmFO subfamily. FAD is required as a cofactor.

The protein resides in the cytoplasm. The enzyme catalyses uridine(54) in tRNA + (6R)-5,10-methylene-5,6,7,8-tetrahydrofolate + NADH + H(+) = 5-methyluridine(54) in tRNA + (6S)-5,6,7,8-tetrahydrofolate + NAD(+). The catalysed reaction is uridine(54) in tRNA + (6R)-5,10-methylene-5,6,7,8-tetrahydrofolate + NADPH + H(+) = 5-methyluridine(54) in tRNA + (6S)-5,6,7,8-tetrahydrofolate + NADP(+). Catalyzes the folate-dependent formation of 5-methyl-uridine at position 54 (M-5-U54) in all tRNAs. The polypeptide is Methylenetetrahydrofolate--tRNA-(uracil-5-)-methyltransferase TrmFO (Prochlorococcus marinus (strain NATL2A)).